The following is a 428-amino-acid chain: Histidine--tRNA ligase (428 aa).

Belongs to the class-II aminoacyl-tRNA synthetase family. Homodimer.

The protein resides in the cytoplasm. The enzyme catalyses tRNA(His) + L-histidine + ATP = L-histidyl-tRNA(His) + AMP + diphosphate + H(+). This is Histidine--tRNA ligase from Bordetella bronchiseptica (strain ATCC BAA-588 / NCTC 13252 / RB50) (Alcaligenes bronchisepticus).